The sequence spans 153 residues: MKACLLLFFYFSFICQLHGADVKIKQNESMMGSTAMTYDLSEEKLMKLKYKSQHGDSEASFRLYQYYCFTKNNIYKQLRFLERSASQGNVTAQFNYGVFLSDTNPTLSEYYNLNRAIYWMEFAVNNGNIDAKSKLQELKKLKRMDRRKNKENP.

An N-terminal signal peptide occupies residues 1-19 (MKACLLLFFYFSFICQLHG).

This is an uncharacterized protein from Escherichia coli (strain K12).